Consider the following 214-residue polypeptide: CASP-like protein 3A1 (214 aa).

Residues 1–49 (MTNGQKIEVAVQLPESKVAATENNETMSGPLVVGGGVAKPFGRKADVMH) are Cytoplasmic-facing. Residues 50–70 (VILRLLCTITSVTAVSFMVTA) traverse the membrane as a helical segment. Over 71-96 (HQSSTVSIYGFMLPVRSKWSFSHSFE) the chain is Extracellular. The helical transmembrane segment at 97–117 (YLVGVSAAVAAHSLLQLLISM) threads the bilayer. Topologically, residues 118-132 (SRLLRKSPVIPSRSH) are cytoplasmic. A helical membrane pass occupies residues 133 to 153 (AWLIFAGDQVFAYAMISAGAA). The Extracellular portion of the chain corresponds to 154-182 (ASGVTNLNRTGIQHTALPNFCKPLNYFCN). N-linked (GlcNAc...) asparagine glycosylation occurs at Asn161. A helical transmembrane segment spans residues 183–203 (HVAVSIAFAFISCLLLAALAV). At 204–214 (QEVIWLSKSKY) the chain is on the cytoplasmic side.

Belongs to the Casparian strip membrane proteins (CASP) family. As to quaternary structure, homodimer and heterodimers.

It localises to the cell membrane. The chain is CASP-like protein 3A1 from Ricinus communis (Castor bean).